A 448-amino-acid polypeptide reads, in one-letter code: C4-dicarboxylate transport protein (448 aa).

7 consecutive transmembrane segments (helical) span residues 22 to 42 (FQVVVAIVLGALLGHFEPAFA), 55 to 75 (LVKMIIAPVIFLTIVTGIAGM), 90 to 110 (TYFLFFSTLALIVGMVVAHVV), 137 to 157 (ELSLVGFLMDIIPATLISAFV), 159 to 179 (GNILQVLFVAVLFGIALALVG), 199 to 219 (LVHMLMKAAPIGAFGAIAFTI), and 232 to 252 (WLVGSFYLTSLFFVLVILGIV). Residues 428–448 (RAPPLQAPVPPPDAVAPVSAR) form a disordered region. Residues 432-441 (LQAPVPPPDA) show a composition bias toward pro residues.

It belongs to the dicarboxylate/amino acid:cation symporter (DAACS) (TC 2.A.23) family.

It localises to the cell inner membrane. Its function is as follows. Responsible for the transport of dicarboxylates such as succinate, fumarate, and malate from the periplasm across the membrane. This is C4-dicarboxylate transport protein from Xanthomonas campestris pv. campestris (strain 8004).